The following is a 469-amino-acid chain: Cholesterol 7-desaturase nvd (469 aa).

Positions 1 to 25 (MASFCASKFLPGLLMLGLGLAVALA) are cleaved as a signal peptide. Residues 58-78 (NFVASQTLLTLTIFGVASFIL) traverse the membrane as a helical segment. Residues 132–238 (IPLVASQDLV…VIEQNGFVLV (107 aa)) enclose the Rieske domain. [2Fe-2S] cluster contacts are provided by cysteine 172, histidine 174, cysteine 192, and histidine 195.

The protein belongs to the cholesterol 7-desaturase family. It depends on [2Fe-2S] cluster as a cofactor.

It is found in the membrane. The catalysed reaction is cholesterol + NADPH + O2 + H(+) = 7-dehydrocholesterol + NADP(+) + 2 H2O. It catalyses the reaction cholesterol + NADH + O2 + H(+) = 7-dehydrocholesterol + NAD(+) + 2 H2O. The protein operates within steroid hormone biosynthesis; dafachronic acid biosynthesis. Its function is as follows. Catalyzes the production of 7-dehydrocholesterol (7-DHC or cholesta-5,7-dien-3beta-ol) by inserting a double bond (desaturating) at the C7-C8 single bond of cholesterol. Essential regulator of steroid biosynthesis as this reaction is the first step in the synthesis of the steroid hormone Delta(7)-dafachronic acid. This Hemicentrotus pulcherrimus (Sea urchin) protein is Cholesterol 7-desaturase nvd.